A 105-amino-acid polypeptide reads, in one-letter code: uncharacterized protein (105 aa).

Positions 31–47 (SVNLPSPSVKPSVTPSV) are enriched in low complexity. A disordered region spans residues 31–80 (SVNLPSPSVKPSVTPSVKKPPHVIRSDYSKPREKPAKVAKKPTVKNDKKP). Positions 54-66 (IRSDYSKPREKPA) are enriched in basic and acidic residues.

This is an uncharacterized protein from Caenorhabditis elegans.